The primary structure comprises 65 residues: Beta-toxin Tf4a (65 aa).

In terms of domain architecture, LCN-type CS-alpha/beta spans 2–63 (KEGYPADSKG…VWDSATNKCG (62 aa)). 4 cysteine pairs are disulfide-bonded: Cys-12/Cys-62, Cys-16/Cys-38, Cys-24/Cys-43, and Cys-28/Cys-45. The residue at position 62 (Cys-62) is a Cysteine amide.

Belongs to the long (4 C-C) scorpion toxin superfamily. Sodium channel inhibitor family. Alpha subfamily. Expressed by the venom gland.

The protein localises to the secreted. Its function is as follows. Alpha toxins bind voltage-independently at site-3 of sodium channels (Nav) and inhibit the inactivation of the activated channels, thereby blocking neuronal transmission. This toxin is toxic to frogs but non-toxic to insect larvae (T.molitor), mammals (rats) and crustaceans (crabs) at the doses assayed. The polypeptide is Beta-toxin Tf4a (Tityus fasciolatus (Central Brazilian scorpion)).